Here is a 206-residue protein sequence, read N- to C-terminus: MASGKFITFEGIDGAGKTTHLAWFCERLQGRLAAAGRQVVVTREPGGTQLGEKLREILLNQPMDLETEALLMFAARREHLALVIEPALARGDWVVSDRFTDATFAYQGGGRGLPRDKLETLERWVQGGFQPDLTVLFDVAPQVASERRGAARMPDKFESESDAFFSRTRAEYLRRAEEAPHRFAIVDATRSIPEIRQQLERVLAAL.

11–18 is an ATP binding site; it reads GIDGAGKT.

The protein belongs to the thymidylate kinase family.

It carries out the reaction dTMP + ATP = dTDP + ADP. In terms of biological role, phosphorylation of dTMP to form dTDP in both de novo and salvage pathways of dTTP synthesis. This is Thymidylate kinase from Burkholderia cenocepacia (strain ATCC BAA-245 / DSM 16553 / LMG 16656 / NCTC 13227 / J2315 / CF5610) (Burkholderia cepacia (strain J2315)).